Reading from the N-terminus, the 106-residue chain is Nucleoid-associated protein Smal_0858 (106 aa).

The disordered stretch occupies residues 81 to 106; the sequence is IDAESKSKMGSATAGMQLPPGMKLPF.

It belongs to the YbaB/EbfC family. In terms of assembly, homodimer.

Its subcellular location is the cytoplasm. The protein resides in the nucleoid. Its function is as follows. Binds to DNA and alters its conformation. May be involved in regulation of gene expression, nucleoid organization and DNA protection. This chain is Nucleoid-associated protein Smal_0858, found in Stenotrophomonas maltophilia (strain R551-3).